We begin with the raw amino-acid sequence, 757 residues long: Lysyl oxidase homolog 4 (757 aa).

A signal peptide spans 1–25; it reads MMWPQPPTFSLFLLLLLSQAPSSRP. 4 SRCR domains span residues 33–134, 160–288, 312–412, and 422–530; these read LRLV…VVCH, VRLK…VSCV, VRLR…VRCN, and VRLA…VACM. 17 disulfide bridges follow: Cys59–Cys123, Cys72–Cys133, Cys103–Cys113, Cys192–Cys277, Cys205–Cys287, Cys252–Cys262, Cys337–Cys401, Cys350–Cys411, Cys381–Cys391, Cys451–Cys516, Cys464–Cys529, Cys498–Cys508, Cys559–Cys565, Cys611–Cys659, Cys643–Cys649, Cys671–Cys681, and Cys718–Cys732. Asn199 carries an N-linked (GlcNAc...) asparagine glycan. Residues 534–737 are lysyl-oxidase like; the sequence is PDLVMNAQLV…WLHNCHTGDS (204 aa). 3 residues coordinate Cu cation: His612, His614, and His616. Asn630 carries an N-linked (GlcNAc...) asparagine glycan. A cross-link (lysine tyrosylquinone (Lys-Tyr)) is located at residues 639-675; the sequence is KASFCLEDTNCPSGVQRRYACANFGEQGVAVGCWDTY. The residue at position 675 (Tyr675) is a 2',4',5'-topaquinone.

It belongs to the lysyl oxidase family. It depends on Cu cation as a cofactor. Requires lysine tyrosylquinone residue as cofactor. Post-translationally, the lysine tyrosylquinone cross-link (LTQ) is generated by condensation of the epsilon-amino group of a lysine with a topaquinone produced by oxidation of tyrosine. May be proteolytically cleaved by BMP1.

Its subcellular location is the secreted. The protein localises to the extracellular space. The enzyme catalyses L-lysyl-[protein] + O2 + H2O = (S)-2-amino-6-oxohexanoyl-[protein] + H2O2 + NH4(+). Catalyzes the oxidative deamination of lysine and hydroxylysine residues in collagen and elastin, resulting in the formation of covalent cross-linkages, and the stabilization of collagen and elastin fibers. The protein is Lysyl oxidase homolog 4 (Loxl4) of Mus musculus (Mouse).